The chain runs to 524 residues: Na(+)/H(+) antiporter NhaG (524 aa).

Transmembrane regions (helical) follow at residues 6–26 (LHHIFELGFFVVMIAAGITAI), 33–53 (PYPIALVIVGTIIGLVHIPLF), 59–79 (FITEGEVFNFVIITLFLPALL), 98–118 (VLALFGGTLISFLIVGFSSMW), 126–146 (AAFVFAALMSATDPVSVLSIF), 169–189 (LAVVLFNISAFYLMTYLDLGI), 193–213 (GLGLWEFVKVISLGLIIGGVL), 242–262 (FLLAEMAGASGVIAVVVAALI), 283–303 (FWDVAALLANSLVFLMVGLEI), 312–332 (WGLAIMAIVIVLIARSAAVYI), and 374–394 (DILVFAFSVVLFSLVVQGLTI).

This sequence belongs to the monovalent cation:proton antiporter 1 (CPA1) transporter (TC 2.A.36) family.

Its subcellular location is the cell membrane. Functionally, na(+)/H(+) antiporter that extrudes sodium in exchange for external protons. Can also transport lithium. In Bacillus atrophaeus, this protein is Na(+)/H(+) antiporter NhaG (nhaG).